A 631-amino-acid chain; its full sequence is Iron transport multicopper oxidase FET3 (631 aa).

Positions 1-25 are cleaved as a signal peptide; sequence MKVSTHHFLPSLLVALWSWATVAQA. The Extracellular segment spans residues 26 to 564; the sequence is ATHTFNWTTG…ANIPDGFTAK (539 aa). 2 N-linked (GlcNAc...) asparagine glycosylation sites follow: N31 and N81. 2 consecutive Plastocyanin-like domains span residues 50-148 and 195-297; these read ITCN…LVVE and NLII…LMLN. Residues H85 and H87 each contribute to the Cu cation site. N-linked (GlcNAc...) asparagine glycosylation is found at N92 and N117. Cu cation is bound by residues H130 and H132. N-linked (GlcNAc...) asparagine glycosylation is found at N199, N203, N249, N270, N297, N364, and N413. The Plastocyanin-like 3 domain occupies 387–506; that stretch reads NPLVYGTNTN…QGLALLLIEA (120 aa). Cu cation-binding residues include H418, H421, H423, H488, C489, H490, and H494. A helical membrane pass occupies residues 565–585; it reads GIVAMTFSCLAGVLGLISLST. At 586 to 630 the chain is on the cytoplasmic side; the sequence is YGLMGVKKSEEEIIRDLGMDPDAVEKVDVSDINSDEDSSRTSKNI. The interval 610–631 is disordered; sequence EKVDVSDINSDEDSSRTSKNIE. Positions 622 to 631 are enriched in basic and acidic residues; that stretch reads DSSRTSKNIE.

The protein belongs to the multicopper oxidase family. Requires Cu cation as cofactor.

The protein localises to the cell membrane. Functionally, iron transport multicopper ferroxidase required for Fe(2+) high affinity uptake. Required to oxidize Fe(2+) and release it from the transporter. Essential component of copper-dependent iron transport. The sequence is that of Iron transport multicopper oxidase FET3 (FET3) from Kluyveromyces lactis (strain ATCC 8585 / CBS 2359 / DSM 70799 / NBRC 1267 / NRRL Y-1140 / WM37) (Yeast).